A 1238-amino-acid polypeptide reads, in one-letter code: Virulence sensor protein BvgS (1238 aa).

Residues 1 to 32 (MPAPHRLYPRSLICLAQALLAWALLAWAPAQA) form the signal peptide. At 33–307 (SQELTLVGKA…REQQWMADHP (275 aa)) the chain is on the cytoplasmic side. A helical transmembrane segment spans residues 308-331 (VVKVAVLNLFAPFTLFRTDEQFGG). At 332-541 (ISAAVLQLLQ…PRTWYAYRNE (210 aa)) the chain is on the periplasmic side. The helical transmembrane segment at 542 to 563 (IYLLIGLGLLSALLFLSWIVYL) threads the bilayer. At 564–1238 (RRQIRQRKRA…LEQRPHQDQP (675 aa)) the chain is on the cytoplasmic side. In terms of domain architecture, PAS spans 580–651 (QLEFMRVLID…MHEFLLTRVA (72 aa)). A PAC domain is found at 652–708 (AEREPRFEDRDVTLHGRTRHVYQWTIPYGDSLGELKGIIGGWIDITERAELLRKLHD). In terms of domain architecture, Histidine kinase spans 726–948 (TMSHEIRTPM…TVSVDLRLTM (223 aa)). His-729 is subject to Phosphohistidine; by autocatalysis. Residues 974–1095 (RVLVVDDHKP…ALRQRLNEAV (122 aa)) enclose the Response regulatory domain. Residue Asp-1023 is modified to 4-aspartylphosphate. An HPt domain is found at 1133 to 1228 (DEALIRQLLE…AALETQLRAW (96 aa)). His-1172 is modified (phosphohistidine).

In terms of processing, activation requires a sequential transfer of a phosphate group from a His in the primary transmitter domain, to an Asp in the receiver domain and to a His in the secondary transmitter domain.

The protein localises to the cell inner membrane. The enzyme catalyses ATP + protein L-histidine = ADP + protein N-phospho-L-histidine.. Its function is as follows. Member of the two-component regulatory system BvgS/BvgA. Phosphorylates BvgA via a four-step phosphorelay in response to environmental signals. This chain is Virulence sensor protein BvgS (bvgS), found in Bordetella pertussis (strain Tohama I / ATCC BAA-589 / NCTC 13251).